A 143-amino-acid polypeptide reads, in one-letter code: Nucleoside diphosphate kinase (143 aa).

ATP is bound by residues Lys10, Phe58, Arg86, Thr92, Arg103, and Asn113. His116 functions as the Pros-phosphohistidine intermediate in the catalytic mechanism.

This sequence belongs to the NDK family. Homotetramer. Requires Mg(2+) as cofactor.

It is found in the cytoplasm. The enzyme catalyses a 2'-deoxyribonucleoside 5'-diphosphate + ATP = a 2'-deoxyribonucleoside 5'-triphosphate + ADP. It carries out the reaction a ribonucleoside 5'-diphosphate + ATP = a ribonucleoside 5'-triphosphate + ADP. Functionally, major role in the synthesis of nucleoside triphosphates other than ATP. The ATP gamma phosphate is transferred to the NDP beta phosphate via a ping-pong mechanism, using a phosphorylated active-site intermediate. This Ehrlichia ruminantium (strain Welgevonden) protein is Nucleoside diphosphate kinase.